A 377-amino-acid chain; its full sequence is MARTGALLLVALALAGCAQACIYKFGTSPDSKATVSGDHWDHGLNGENWEGKDGAGNAWVCKTGRKQSPINVPQYQVLDGKGSKIANGLQTQWSYPDLMSNGTSVQVINNGHTIQVQWTYNYAGHATIAIPAMHNQTNRIVDVLEMRPNDAADRVTAVPTQFHFHSTSEHLLAGKIYPLELHIVHQVTEKLEACKGGCFSVTGILFQLDNGPDNELLEPIFANMPSREGTFSNLPAGTTIKLGELLPSDRDYVTYEGSLTTPPCSEGLLWHVMTQPQRISFGQWNRYRLAVGLKECNSTETAADAGHHHHHRRLLHNHAHLEEVPAATSEPKHYFRRVMLAESANPDAYTCKAVAFGQNFRNPQYANGRTIKLARYH.

The first 20 residues, 1–20, serve as a signal peptide directing secretion; it reads MARTGALLLVALALAGCAQA. Positions 38-318 constitute an Alpha-carbonic anhydrase domain; that stretch reads DHWDHGLNGE…HHHRRLLHNH (281 aa). 3 disulfide bridges follow: Cys61–Cys264, Cys194–Cys198, and Cys296–Cys351. A glycan (N-linked (GlcNAc...) asparagine) is linked at Asn101. His112 functions as the Proton acceptor in the catalytic mechanism. Residue Asn135 is glycosylated (N-linked (GlcNAc...) asparagine). Positions 163, 165, and 182 each coordinate Zn(2+). Substrate contacts are provided by residues Thr260 and 260–261; that span reads TT. N-linked (GlcNAc...) asparagine glycosylation occurs at Asn297.

It belongs to the alpha-carbonic anhydrase family. Tetramer of two large and two small subunits linked by two disulfide bonds. It depends on Zn(2+) as a cofactor.

Its subcellular location is the periplasm. It carries out the reaction hydrogencarbonate + H(+) = CO2 + H2O. Functionally, reversible hydration of carbon dioxide. The sequence is that of Carbonic anhydrase 1 (CAH1) from Chlamydomonas reinhardtii (Chlamydomonas smithii).